The following is a 131-amino-acid chain: Protein Turandot M (131 aa).

The N-terminal stretch at 1-23 (MNPTVYLSCLVVFSLFYLGKAQA) is a signal peptide.

Belongs to the Turandot family.

The protein localises to the secreted. Its function is as follows. A humoral factor that may play a role in stress tolerance. Requires Mekk1 expression in the fat body to regulate response to septic injury and consequent immune response. In Drosophila yakuba (Fruit fly), this protein is Protein Turandot M.